The sequence spans 322 residues: Undecaprenyl-phosphate 4-deoxy-4-formamido-L-arabinose transferase (322 aa).

The Cytoplasmic portion of the chain corresponds to 1 to 235 (MFEIHPVKKV…TCLTTTPLRM (235 aa)). The chain crosses the membrane as a helical span at residues 236–256 (LSLLGSIIAIGGFSIAVLLVI). Over 257 to 269 (LRLTFGPQWAAEG) the chain is Periplasmic. A helical membrane pass occupies residues 270 to 290 (VFMLFAVLFTFIGAQFIGMGL). Residues 291-322 (LGEYIGRIYTDVRARPRYFVQQVIRPSSKENE) are Cytoplasmic-facing.

Belongs to the glycosyltransferase 2 family.

The protein resides in the cell inner membrane. It carries out the reaction UDP-4-deoxy-4-formamido-beta-L-arabinose + di-trans,octa-cis-undecaprenyl phosphate = 4-deoxy-4-formamido-alpha-L-arabinopyranosyl di-trans,octa-cis-undecaprenyl phosphate + UDP. It functions in the pathway glycolipid biosynthesis; 4-amino-4-deoxy-alpha-L-arabinose undecaprenyl phosphate biosynthesis; 4-amino-4-deoxy-alpha-L-arabinose undecaprenyl phosphate from UDP-4-deoxy-4-formamido-beta-L-arabinose and undecaprenyl phosphate: step 1/2. The protein operates within bacterial outer membrane biogenesis; lipopolysaccharide biosynthesis. Its function is as follows. Catalyzes the transfer of 4-deoxy-4-formamido-L-arabinose from UDP to undecaprenyl phosphate. The modified arabinose is attached to lipid A and is required for resistance to polymyxin and cationic antimicrobial peptides. The polypeptide is Undecaprenyl-phosphate 4-deoxy-4-formamido-L-arabinose transferase (Escherichia coli O157:H7 (strain EC4115 / EHEC)).